A 320-amino-acid chain; its full sequence is Cytochrome c biogenesis protein CcsA (320 aa).

Transmembrane regions (helical) follow at residues 14–34 (VLLL…WCFW), 68–88 (GHFP…ACTL), 101–121 (LVAA…SFAL), 146–166 (VIMV…AVLM), 226–246 (TITV…VWAN), 260–277 (TWAL…HTRL), and 289–309 (VASL…LLGI).

Belongs to the CcmF/CycK/Ccl1/NrfE/CcsA family. As to quaternary structure, may interact with ccs1.

The protein localises to the cellular thylakoid membrane. Required during biogenesis of c-type cytochromes (cytochrome c6 and cytochrome f) at the step of heme attachment. In Synechococcus sp. (strain WH7803), this protein is Cytochrome c biogenesis protein CcsA.